Here is a 314-residue protein sequence, read N- to C-terminus: Phosphoribosylaminoimidazole-succinocarboxamide synthase (314 aa).

It belongs to the SAICAR synthetase family.

It carries out the reaction 5-amino-1-(5-phospho-D-ribosyl)imidazole-4-carboxylate + L-aspartate + ATP = (2S)-2-[5-amino-1-(5-phospho-beta-D-ribosyl)imidazole-4-carboxamido]succinate + ADP + phosphate + 2 H(+). It functions in the pathway purine metabolism; IMP biosynthesis via de novo pathway; 5-amino-1-(5-phospho-D-ribosyl)imidazole-4-carboxamide from 5-amino-1-(5-phospho-D-ribosyl)imidazole-4-carboxylate: step 1/2. The polypeptide is Phosphoribosylaminoimidazole-succinocarboxamide synthase (Bacteroides thetaiotaomicron (strain ATCC 29148 / DSM 2079 / JCM 5827 / CCUG 10774 / NCTC 10582 / VPI-5482 / E50)).